The following is a 318-amino-acid chain: Thymidylate synthase (318 aa).

Residues Arg-25 and 180–181 (RR) each bind dUMP. Residue Cys-200 is the Nucleophile of the active site. Residues 220 to 223 (RSGD), Asn-231, and 261 to 263 (HIY) contribute to the dUMP site. Asp-223 contributes to the (6R)-5,10-methylene-5,6,7,8-tetrahydrofolate binding site. Residue Ala-317 coordinates (6R)-5,10-methylene-5,6,7,8-tetrahydrofolate.

This sequence belongs to the thymidylate synthase family. Bacterial-type ThyA subfamily. Homodimer.

Its subcellular location is the cytoplasm. It catalyses the reaction dUMP + (6R)-5,10-methylene-5,6,7,8-tetrahydrofolate = 7,8-dihydrofolate + dTMP. It participates in pyrimidine metabolism; dTTP biosynthesis. Catalyzes the reductive methylation of 2'-deoxyuridine-5'-monophosphate (dUMP) to 2'-deoxythymidine-5'-monophosphate (dTMP) while utilizing 5,10-methylenetetrahydrofolate (mTHF) as the methyl donor and reductant in the reaction, yielding dihydrofolate (DHF) as a by-product. This enzymatic reaction provides an intracellular de novo source of dTMP, an essential precursor for DNA biosynthesis. The sequence is that of Thymidylate synthase from Lactobacillus gasseri (strain ATCC 33323 / DSM 20243 / BCRC 14619 / CIP 102991 / JCM 1131 / KCTC 3163 / NCIMB 11718 / NCTC 13722 / AM63).